The chain runs to 179 residues: UPF0167 protein PA1536 (179 aa).

This sequence belongs to the UPF0167 family.

The protein is UPF0167 protein PA1536 of Pseudomonas aeruginosa (strain ATCC 15692 / DSM 22644 / CIP 104116 / JCM 14847 / LMG 12228 / 1C / PRS 101 / PAO1).